A 419-amino-acid polypeptide reads, in one-letter code: Dual specificity protein phosphatase 7 (419 aa).

The disordered stretch occupies residues 1 to 47; it reads MKNQLRGPPARAHMSTSGAAAAGGTRAGSEPGAGSGSGAGTGAGAAT. Residues 10–29 show a composition bias toward low complexity; that stretch reads ARAHMSTSGAAAAGGTRAGS. The segment covering 31–47 has biased composition (gly residues); that stretch reads PGAGSGSGAGTGAGAAT. The Rhodanese domain occupies 68–187; sequence GGASLLLLDC…FQTEYSEHCE (120 aa). The disordered stretch occupies residues 216 to 240; it reads CSDGESDRELPSSATESDGSPVPSS. Residues 227-240 are compositionally biased toward polar residues; that stretch reads SSATESDGSPVPSS. Positions 244 to 387 constitute a Tyrosine-protein phosphatase domain; sequence FPVQILPYLY…LLDFERTLGL (144 aa). Cysteine 331 acts as the Phosphocysteine intermediate in catalysis. Position 331–337 (331–337) interacts with substrate; that stretch reads CLAGISR.

It belongs to the protein-tyrosine phosphatase family. Non-receptor class dual specificity subfamily. Interacts with MAPK1/ERK2; the interaction enhances DUSP7 phosphatase activity. As to expression, strongly expressed in liver. Expressed at significantly higher levels in malignant hematopoietic cells than in corresponding non-malignant cells.

Its subcellular location is the cytoplasm. The catalysed reaction is O-phospho-L-tyrosyl-[protein] + H2O = L-tyrosyl-[protein] + phosphate. It catalyses the reaction O-phospho-L-seryl-[protein] + H2O = L-seryl-[protein] + phosphate. The enzyme catalyses O-phospho-L-threonyl-[protein] + H2O = L-threonyl-[protein] + phosphate. With respect to regulation, strongly inhibited by sodium orthovanadate. Its function is as follows. Dual specificity protein phosphatase. Shows high activity towards MAPK1/ERK2. Also has lower activity towards MAPK14 and MAPK8. In arrested oocytes, plays a role in meiotic resumption. Promotes nuclear envelope breakdown and activation of the CDK1/Cyclin-B complex in oocytes, probably by dephosphorylating and inactivating the conventional protein kinase C (cPKC) isozyme PRKCB. May also inactivate PRKCA and/or PRKCG. Also important in oocytes for normal chromosome alignment on the metaphase plate and progression to anaphase, where it might regulate activity of the spindle-assembly checkpoint (SAC) complex. This is Dual specificity protein phosphatase 7 from Homo sapiens (Human).